We begin with the raw amino-acid sequence, 615 residues long: DNA mismatch repair protein MutL (615 aa).

The segment at 362 to 397 (HFAEPAVREPVAPRYSPAPASGSRPAAPWPNAQPGY) is disordered. Positions 373–387 (APRYSPAPASGSRPA) are enriched in low complexity.

This sequence belongs to the DNA mismatch repair MutL/HexB family.

Its function is as follows. This protein is involved in the repair of mismatches in DNA. It is required for dam-dependent methyl-directed DNA mismatch repair. May act as a 'molecular matchmaker', a protein that promotes the formation of a stable complex between two or more DNA-binding proteins in an ATP-dependent manner without itself being part of a final effector complex. This Escherichia coli O81 (strain ED1a) protein is DNA mismatch repair protein MutL.